The following is a 601-amino-acid chain: ATP-dependent lipid A-core flippase (601 aa).

Helical transmembrane passes span Val26–Leu46, Leu82–Leu102, Val167–Ile187, and Val263–Val283. The ABC transmembrane type-1 domain maps to Ala30–Arg321. The 237-residue stretch at Ile353–Met589 folds into the ABC transporter domain. Gly387–Ser394 provides a ligand contact to ATP.

The protein belongs to the ABC transporter superfamily. Lipid exporter (TC 3.A.1.106) family. As to quaternary structure, homodimer.

Its subcellular location is the cell inner membrane. It carries out the reaction ATP + H2O + lipid A-core oligosaccharideSide 1 = ADP + phosphate + lipid A-core oligosaccharideSide 2.. Functionally, involved in lipopolysaccharide (LPS) biosynthesis. Translocates lipid A-core from the inner to the outer leaflet of the inner membrane. Transmembrane domains (TMD) form a pore in the inner membrane and the ATP-binding domain (NBD) is responsible for energy generation. This is ATP-dependent lipid A-core flippase from Aromatoleum aromaticum (strain DSM 19018 / LMG 30748 / EbN1) (Azoarcus sp. (strain EbN1)).